The chain runs to 249 residues: Small ribosomal subunit protein eS6 (249 aa).

Residues 216-229 show a composition bias toward basic and acidic residues; that stretch reads RMKEAKEKRQEQIA. Residues 216–249 form a disordered region; the sequence is RMKEAKEKRQEQIAKRRRLSSLRASTSKSESSQK. A phosphoserine mark is found at serine 235, serine 236, serine 240, serine 244, and serine 247. A compositionally biased stretch (low complexity) spans 236 to 249; that stretch reads SLRASTSKSESSQK.

It belongs to the eukaryotic ribosomal protein eS6 family. As to quaternary structure, component of the small ribosomal subunit. Part of the small subunit (SSU) processome, composed of more than 70 proteins and the RNA chaperone small nucleolar RNA (snoRNA) U3. Ribosomal protein S6 is the major substrate of protein kinases in eukaryote ribosomes. The phosphorylation is stimulated by growth factors, tumor promoting agents, and mitogens. It is dephosphorylated at growth arrest.

Its subcellular location is the cytoplasm. The protein localises to the nucleus. The protein resides in the nucleolus. Functionally, component of the 40S small ribosomal subunit. Plays an important role in controlling cell growth and proliferation through the selective translation of particular classes of mRNA. Part of the small subunit (SSU) processome, first precursor of the small eukaryotic ribosomal subunit. During the assembly of the SSU processome in the nucleolus, many ribosome biogenesis factors, an RNA chaperone and ribosomal proteins associate with the nascent pre-rRNA and work in concert to generate RNA folding, modifications, rearrangements and cleavage as well as targeted degradation of pre-ribosomal RNA by the RNA exosome. This chain is Small ribosomal subunit protein eS6 (RPS6), found in Gallus gallus (Chicken).